Consider the following 1457-residue polypeptide: DNA-directed RNA polymerase III subunit RPC1 (1457 aa).

Zn(2+) contacts are provided by Cys67, Cys70, Cys77, His80, Cys107, Cys110, and Cys154. 3 residues coordinate Mg(2+): Asp508, Asp510, and Asp512. The tract at residues Pro854–Glu866 is bridging helix.

The protein belongs to the RNA polymerase beta' chain family. Component of the RNA polymerase III (Pol III) complex consisting of 17 subunits.

It localises to the nucleus. The catalysed reaction is RNA(n) + a ribonucleoside 5'-triphosphate = RNA(n+1) + diphosphate. Functionally, DNA-dependent RNA polymerase catalyzes the transcription of DNA into RNA using the four ribonucleoside triphosphates as substrates. Largest and catalytic core component of RNA polymerase III which synthesizes small RNAs, such as 5S rRNA and tRNAs. Forms the polymerase active center together with the second largest subunit. A single-stranded DNA template strand of the promoter is positioned within the central active site cleft of Pol III. A bridging helix emanates from RPC1 and crosses the cleft near the catalytic site and is thought to promote translocation of Pol III by acting as a ratchet that moves the RNA-DNA hybrid through the active site by switching from straight to bent conformations at each step of nucleotide addition. The protein is DNA-directed RNA polymerase III subunit RPC1 (RPC1) of Debaryomyces hansenii (strain ATCC 36239 / CBS 767 / BCRC 21394 / JCM 1990 / NBRC 0083 / IGC 2968) (Yeast).